Consider the following 91-residue polypeptide: Probable Fe(2+)-trafficking protein (91 aa).

Belongs to the Fe(2+)-trafficking protein family.

In terms of biological role, could be a mediator in iron transactions between iron acquisition and iron-requiring processes, such as synthesis and/or repair of Fe-S clusters in biosynthetic enzymes. This Histophilus somni (strain 129Pt) (Haemophilus somnus) protein is Probable Fe(2+)-trafficking protein.